A 359-amino-acid chain; its full sequence is Queuine tRNA-ribosyltransferase (359 aa).

Aspartate 92 acts as the Proton acceptor in catalysis. Substrate-binding positions include 92-96 (DSGGF), aspartate 146, glutamine 189, and glycine 216. Residues 245–251 (GVGKPAD) form an RNA binding region. Aspartate 264 serves as the catalytic Nucleophile. The interval 269-273 (TRSGR) is RNA binding; important for wobble base 34 recognition. Cysteine 302, cysteine 304, cysteine 307, and histidine 333 together coordinate Zn(2+).

The protein belongs to the queuine tRNA-ribosyltransferase family. As to quaternary structure, homodimer. Within each dimer, one monomer is responsible for RNA recognition and catalysis, while the other monomer binds to the replacement base PreQ1. The cofactor is Zn(2+).

The catalysed reaction is 7-aminomethyl-7-carbaguanine + guanosine(34) in tRNA = 7-aminomethyl-7-carbaguanosine(34) in tRNA + guanine. It participates in tRNA modification; tRNA-queuosine biosynthesis. Functionally, catalyzes the base-exchange of a guanine (G) residue with the queuine precursor 7-aminomethyl-7-deazaguanine (PreQ1) at position 34 (anticodon wobble position) in tRNAs with GU(N) anticodons (tRNA-Asp, -Asn, -His and -Tyr). Catalysis occurs through a double-displacement mechanism. The nucleophile active site attacks the C1' of nucleotide 34 to detach the guanine base from the RNA, forming a covalent enzyme-RNA intermediate. The proton acceptor active site deprotonates the incoming PreQ1, allowing a nucleophilic attack on the C1' of the ribose to form the product. After dissociation, two additional enzymatic reactions on the tRNA convert PreQ1 to queuine (Q), resulting in the hypermodified nucleoside queuosine (7-(((4,5-cis-dihydroxy-2-cyclopenten-1-yl)amino)methyl)-7-deazaguanosine). In Rickettsia bellii (strain RML369-C), this protein is Queuine tRNA-ribosyltransferase.